The sequence spans 179 residues: MSRIGKQPVPVPTGVDVMIEGQKVSVKGPKGALDLTVAEPITVSRNDDGAIVISRPNDERRNRSLHGLSRTLVSNLVTGVTEGYTTKMEIHGVGYRVQLKGANLEFALGYSHPVVIEAPEGITFAVQAPTKFTVSGIDKQKVGQISANIRRLRRPDPYKGKGVRYEGEQIRRKVGKTGK.

This sequence belongs to the universal ribosomal protein uL6 family. In terms of assembly, part of the 50S ribosomal subunit.

Its function is as follows. This protein binds to the 23S rRNA, and is important in its secondary structure. It is located near the subunit interface in the base of the L7/L12 stalk, and near the tRNA binding site of the peptidyltransferase center. This Mycobacterium ulcerans (strain Agy99) protein is Large ribosomal subunit protein uL6.